The primary structure comprises 562 residues: Formate--tetrahydrofolate ligase (562 aa).

77–84 provides a ligand contact to ATP; that stretch reads TPAGEGKS.

It belongs to the formate--tetrahydrofolate ligase family.

The catalysed reaction is (6S)-5,6,7,8-tetrahydrofolate + formate + ATP = (6R)-10-formyltetrahydrofolate + ADP + phosphate. The protein operates within one-carbon metabolism; tetrahydrofolate interconversion. The protein is Formate--tetrahydrofolate ligase of Corynebacterium jeikeium (strain K411).